The sequence spans 759 residues: LPS-assembly protein LptD (759 aa).

The signal sequence occupies residues 1 to 45; that stretch reads MKPLKLELNPRDFNHYQAAFLPYRMKIKQPLHVLCFSVCSLSAVA.

Belongs to the LptD family. Component of the lipopolysaccharide transport and assembly complex. Interacts with LptE and LptA.

Its subcellular location is the cell outer membrane. Functionally, together with LptE, is involved in the assembly of lipopolysaccharide (LPS) at the surface of the outer membrane. The chain is LPS-assembly protein LptD from Pseudoalteromonas atlantica (strain T6c / ATCC BAA-1087).